The following is a 188-amino-acid chain: Trafficking protein particle complex subunit 5 (188 aa).

At Ser-10 the chain carries Phosphoserine.

This sequence belongs to the TRAPP small subunits family. BET3 subfamily. Component of the multisubunit TRAPP (transport protein particle) complex, which includes at least TRAPPC2, TRAPPC2L, TRAPPC3, TRAPPC3L, TRAPPC4, TRAPPC5, TRAPPC8, TRAPPC9, TRAPPC10, TRAPPC11 and TRAPPC12.

The protein localises to the golgi apparatus. It is found in the cis-Golgi network. It localises to the endoplasmic reticulum. Functionally, may play a role in vesicular transport from endoplasmic reticulum to Golgi. In Bos taurus (Bovine), this protein is Trafficking protein particle complex subunit 5 (TRAPPC5).